We begin with the raw amino-acid sequence, 153 residues long: Iron-sulfur cluster assembly scaffold protein IscU 1 (153 aa).

[2Fe-2S] cluster is bound by residues Cys33, Cys58, His101, and Cys102.

The protein belongs to the NifU family. Forms a heterotetramer with IscS2.

Its function is as follows. A scaffold on which IscS assembles Fe-S clusters. Subsequently gives the nascent cluster to other proteins. It is likely that Fe-S cluster coordination is flexible as the role of this complex is to build and then hand off Fe-S clusters. This Archaeoglobus fulgidus (strain ATCC 49558 / DSM 4304 / JCM 9628 / NBRC 100126 / VC-16) protein is Iron-sulfur cluster assembly scaffold protein IscU 1 (iscU1).